Here is a 125-residue protein sequence, read N- to C-terminus: Glycine cleavage system H protein (125 aa).

In terms of domain architecture, Lipoyl-binding spans 23-105; it reads VSTVGITEHA…FEGGWLFKVR (83 aa). The residue at position 64 (Lys-64) is an N6-lipoyllysine.

The protein belongs to the GcvH family. In terms of assembly, the glycine cleavage system is composed of four proteins: P, T, L and H. Requires (R)-lipoate as cofactor.

The glycine cleavage system catalyzes the degradation of glycine. The H protein shuttles the methylamine group of glycine from the P protein to the T protein. The protein is Glycine cleavage system H protein of Streptomyces avermitilis (strain ATCC 31267 / DSM 46492 / JCM 5070 / NBRC 14893 / NCIMB 12804 / NRRL 8165 / MA-4680).